The primary structure comprises 432 residues: Tryptophan--tRNA ligase, cytoplasmic (432 aa).

The 'HIGH' region motif lies at 111–120; sequence PSSDSMHLGH. The 'KMSKS' region motif lies at 295 to 299; sequence KMSAS.

The protein belongs to the class-I aminoacyl-tRNA synthetase family. Homodimer.

It localises to the cytoplasm. The enzyme catalyses tRNA(Trp) + L-tryptophan + ATP = L-tryptophyl-tRNA(Trp) + AMP + diphosphate + H(+). This chain is Tryptophan--tRNA ligase, cytoplasmic (WRS1), found in Saccharomyces cerevisiae (strain ATCC 204508 / S288c) (Baker's yeast).